An 824-amino-acid polypeptide reads, in one-letter code: ABC transporter B family member 7 (824 aa).

Positions R41–N101 are disordered. Low complexity predominate over residues N63–N101. The next 6 membrane-spanning stretches (helical) occupy residues I164–L184, W252–T272, L325–L345, W347–F367, A431–F451, and I461–I481. Residues F167–K489 form the ABC transmembrane type-1 domain. The ABC transporter domain maps to I521–L767. G570–E576 is a binding site for ATP. Positions N772 to N813 are disordered.

This sequence belongs to the ABC transporter superfamily. ABCB family.

It is found in the membrane. This chain is ABC transporter B family member 7 (abcB7), found in Dictyostelium discoideum (Social amoeba).